A 557-amino-acid polypeptide reads, in one-letter code: NADP-dependent malic enzyme (557 aa).

Tyr88 functions as the Proton donor in the catalytic mechanism. An NADP(+)-binding site is contributed by Arg141. Lys159 (proton acceptor) is an active-site residue. Residues Glu231, Asp232, and Asp255 each coordinate a divalent metal cation. Asp255 provides a ligand contact to NADP(+). The residue at position 322 (Ser322) is a Phosphoserine. Asn394 lines the NADP(+) pocket.

The protein belongs to the malic enzymes family. As to quaternary structure, homotetramer. Mg(2+) is required as a cofactor. Mn(2+) serves as cofactor.

Its subcellular location is the cytoplasm. It catalyses the reaction (S)-malate + NADP(+) = pyruvate + CO2 + NADPH. It carries out the reaction oxaloacetate + H(+) = pyruvate + CO2. In terms of biological role, catalyzes the oxidative decarboxylation of (S)-malate in the presence of NADP(+) and divalent metal ions, and decarboxylation of oxaloacetate. The sequence is that of NADP-dependent malic enzyme (ME1) from Sus scrofa (Pig).